The following is a 313-amino-acid chain: Acetyl-coenzyme A carboxylase carboxyl transferase subunit alpha (313 aa).

A CoA carboxyltransferase C-terminal domain is found at 42–292; that stretch reads KSDKLLRDTY…GAAIGEELDK (251 aa).

It belongs to the AccA family. Acetyl-CoA carboxylase is a heterohexamer composed of biotin carboxyl carrier protein (AccB), biotin carboxylase (AccC) and two subunits each of ACCase subunit alpha (AccA) and ACCase subunit beta (AccD).

The protein localises to the cytoplasm. The enzyme catalyses N(6)-carboxybiotinyl-L-lysyl-[protein] + acetyl-CoA = N(6)-biotinyl-L-lysyl-[protein] + malonyl-CoA. It participates in lipid metabolism; malonyl-CoA biosynthesis; malonyl-CoA from acetyl-CoA: step 1/1. Component of the acetyl coenzyme A carboxylase (ACC) complex. First, biotin carboxylase catalyzes the carboxylation of biotin on its carrier protein (BCCP) and then the CO(2) group is transferred by the carboxyltransferase to acetyl-CoA to form malonyl-CoA. This chain is Acetyl-coenzyme A carboxylase carboxyl transferase subunit alpha, found in Rhizorhabdus wittichii (strain DSM 6014 / CCUG 31198 / JCM 15750 / NBRC 105917 / EY 4224 / RW1) (Sphingomonas wittichii).